A 484-amino-acid polypeptide reads, in one-letter code: Regulator of G-protein signaling 9 (484 aa).

Residues 30 to 105 (PDTGVRVQNQ…PDSSLYRFQT (76 aa)) enclose the DEP domain. The G protein gamma domain occupies 219-280 (VVSVRKEIMY…ITDDTQFWDL (62 aa)). In terms of domain architecture, RGS spans 299–414 (NFSELIRDPK…LKSPIYKEML (116 aa)). The tract at residues 460–484 (TTVDITQVMSKLDRRSQLRKEPPPK) is disordered. Positions 470–484 (KLDRRSQLRKEPPPK) are enriched in basic and acidic residues.

Heterodimer with GNB5. Interacts with RGS7BP, leading to regulate the subcellular location of the heterodimer formed with GNB5. Component of the RGS9-1-Gbeta5 complex composed of RGS9 (RGS9-1), Gbeta5 (GNB5) and RGS9BP. Interacts with PDE6G and GNAT1. Phosphorylation is decreased by light exposition. In terms of tissue distribution, photoreceptor outer segments.

The protein resides in the membrane. Inhibits signal transduction by increasing the GTPase activity of G protein alpha subunits thereby driving them into their inactive GDP-bound form. Binds to GNAT1. Involved in phototransduction; key element in the recovery phase of visual transduction. The protein is Regulator of G-protein signaling 9 (RGS9) of Bos taurus (Bovine).